Reading from the N-terminus, the 353-residue chain is Histidinol-phosphate aminotransferase (353 aa).

The residue at position 211 (K211) is an N6-(pyridoxal phosphate)lysine.

It belongs to the class-II pyridoxal-phosphate-dependent aminotransferase family. Histidinol-phosphate aminotransferase subfamily. In terms of assembly, homodimer. Requires pyridoxal 5'-phosphate as cofactor.

The enzyme catalyses L-histidinol phosphate + 2-oxoglutarate = 3-(imidazol-4-yl)-2-oxopropyl phosphate + L-glutamate. It functions in the pathway amino-acid biosynthesis; L-histidine biosynthesis; L-histidine from 5-phospho-alpha-D-ribose 1-diphosphate: step 7/9. The sequence is that of Histidinol-phosphate aminotransferase from Marinomonas sp. (strain MWYL1).